Here is a 79-residue protein sequence, read N- to C-terminus: Small ribosomal subunit protein bS16c (79 aa).

This sequence belongs to the bacterial ribosomal protein bS16 family.

The protein resides in the plastid. Its subcellular location is the chloroplast. This chain is Small ribosomal subunit protein bS16c, found in Trieres chinensis (Marine centric diatom).